The chain runs to 464 residues: 3-isopropylmalate dehydratase large subunit (464 aa).

Cys345, Cys405, and Cys408 together coordinate [4Fe-4S] cluster.

This sequence belongs to the aconitase/IPM isomerase family. LeuC type 1 subfamily. Heterodimer of LeuC and LeuD. [4Fe-4S] cluster serves as cofactor.

The catalysed reaction is (2R,3S)-3-isopropylmalate = (2S)-2-isopropylmalate. It participates in amino-acid biosynthesis; L-leucine biosynthesis; L-leucine from 3-methyl-2-oxobutanoate: step 2/4. In terms of biological role, catalyzes the isomerization between 2-isopropylmalate and 3-isopropylmalate, via the formation of 2-isopropylmaleate. The chain is 3-isopropylmalate dehydratase large subunit from Bacteroides thetaiotaomicron (strain ATCC 29148 / DSM 2079 / JCM 5827 / CCUG 10774 / NCTC 10582 / VPI-5482 / E50).